A 348-amino-acid chain; its full sequence is tRNA N6-adenosine threonylcarbamoyltransferase (348 aa).

H116 and H120 together coordinate Fe cation. Substrate is bound by residues 138–142 (IISGG), D171, G184, and N282. D310 contributes to the Fe cation binding site.

It belongs to the KAE1 / TsaD family. Fe(2+) serves as cofactor.

Its subcellular location is the cytoplasm. It carries out the reaction L-threonylcarbamoyladenylate + adenosine(37) in tRNA = N(6)-L-threonylcarbamoyladenosine(37) in tRNA + AMP + H(+). In terms of biological role, required for the formation of a threonylcarbamoyl group on adenosine at position 37 (t(6)A37) in tRNAs that read codons beginning with adenine. Is involved in the transfer of the threonylcarbamoyl moiety of threonylcarbamoyl-AMP (TC-AMP) to the N6 group of A37, together with TsaE and TsaB. TsaD likely plays a direct catalytic role in this reaction. This Ehrlichia ruminantium (strain Welgevonden) protein is tRNA N6-adenosine threonylcarbamoyltransferase.